A 133-amino-acid chain; its full sequence is MSTVKFTVVEPTIFSNVSISFKEDKIILFLESKVIGTLYQTSGNILWESECPITRSSYKELSHWMKCYDCGRDFCVPKNCDYHDQIPKSIYRESVLNKYTLTIKWTNYCSLESAITKTIQVYIDLNKIETNTN.

It belongs to the mimivirus L15/L51/R83 family.

This is an uncharacterized protein from Acanthamoeba polyphaga (Amoeba).